The sequence spans 486 residues: Protein nucleotidyltransferase YdiU (486 aa).

ATP contacts are provided by Gly90, Gly92, Arg93, Lys113, Asp125, Gly126, Arg176, and Arg183. Asp252 (proton acceptor) is an active-site residue. Residues Asn253 and Asp262 each contribute to the Mg(2+) site. Asp262 lines the ATP pocket.

The protein belongs to the SELO family. Requires Mg(2+) as cofactor. Mn(2+) serves as cofactor.

It carries out the reaction L-seryl-[protein] + ATP = 3-O-(5'-adenylyl)-L-seryl-[protein] + diphosphate. It catalyses the reaction L-threonyl-[protein] + ATP = 3-O-(5'-adenylyl)-L-threonyl-[protein] + diphosphate. The enzyme catalyses L-tyrosyl-[protein] + ATP = O-(5'-adenylyl)-L-tyrosyl-[protein] + diphosphate. The catalysed reaction is L-histidyl-[protein] + UTP = N(tele)-(5'-uridylyl)-L-histidyl-[protein] + diphosphate. It carries out the reaction L-seryl-[protein] + UTP = O-(5'-uridylyl)-L-seryl-[protein] + diphosphate. It catalyses the reaction L-tyrosyl-[protein] + UTP = O-(5'-uridylyl)-L-tyrosyl-[protein] + diphosphate. In terms of biological role, nucleotidyltransferase involved in the post-translational modification of proteins. It can catalyze the addition of adenosine monophosphate (AMP) or uridine monophosphate (UMP) to a protein, resulting in modifications known as AMPylation and UMPylation. This Pseudomonas aeruginosa (strain LESB58) protein is Protein nucleotidyltransferase YdiU.